The sequence spans 574 residues: uncharacterized protein (574 aa).

A run of 11 helical transmembrane segments spans residues 14-34 (FFPT…LFFG), 54-74 (VVPL…LGIV), 124-144 (WLMA…SDTA), 205-225 (ICKC…TGTI), 253-273 (SWMA…WFIV), 323-343 (LVIF…VIPG), 350-370 (KGYV…FIWP), 403-423 (FPWS…AVRV), 441-461 (MPFF…TEFS), 485-505 (PLYF…LPMA), and 520-540 (MIDM…ITAI). Residues N565 and N569 are each glycosylated (N-linked (GlcNAc...) asparagine).

Belongs to the SLC13A/DASS transporter (TC 2.A.47) family. NADC subfamily.

It localises to the membrane. This is an uncharacterized protein from Caenorhabditis elegans.